The sequence spans 335 residues: HTH-type transcriptional regulator MalR (335 aa).

The HTH lacI-type domain occupies 1 to 55; the sequence is MNIKDIARLSGVGVSTVSRVINNHPDVKQSTREKVLQIIKDSNYIPNNSARILKQ. The H-T-H motif DNA-binding region spans 3 to 22; sequence IKDIARLSGVGVSTVSRVIN.

In terms of biological role, repressor of glucanotransferase gene expression. The chain is HTH-type transcriptional regulator MalR from Clostridium butyricum.